A 388-amino-acid chain; its full sequence is Succinate--CoA ligase [ADP-forming] subunit beta (388 aa).

The 236-residue stretch at lysine 9–histidine 244 folds into the ATP-grasp domain. Residues lysine 46, glycine 53–glycine 55, glutamate 99, serine 102, and glutamate 107 each bind ATP. Asparagine 199 and aspartate 213 together coordinate Mg(2+). Substrate-binding positions include asparagine 264 and glycine 321–valine 323.

It belongs to the succinate/malate CoA ligase beta subunit family. As to quaternary structure, heterotetramer of two alpha and two beta subunits. It depends on Mg(2+) as a cofactor.

The enzyme catalyses succinate + ATP + CoA = succinyl-CoA + ADP + phosphate. The catalysed reaction is GTP + succinate + CoA = succinyl-CoA + GDP + phosphate. The protein operates within carbohydrate metabolism; tricarboxylic acid cycle; succinate from succinyl-CoA (ligase route): step 1/1. In terms of biological role, succinyl-CoA synthetase functions in the citric acid cycle (TCA), coupling the hydrolysis of succinyl-CoA to the synthesis of either ATP or GTP and thus represents the only step of substrate-level phosphorylation in the TCA. The beta subunit provides nucleotide specificity of the enzyme and binds the substrate succinate, while the binding sites for coenzyme A and phosphate are found in the alpha subunit. In Vibrio vulnificus (strain YJ016), this protein is Succinate--CoA ligase [ADP-forming] subunit beta.